The chain runs to 79 residues: ATP synthase subunit c (79 aa).

2 helical membrane passes run 11 to 31 (ISAA…IGIL) and 55 to 75 (IVMG…LYLI).

This sequence belongs to the ATPase C chain family. As to quaternary structure, F-type ATPases have 2 components, F(1) - the catalytic core - and F(0) - the membrane proton channel. F(1) has five subunits: alpha(3), beta(3), gamma(1), delta(1), epsilon(1). F(0) has three main subunits: a(1), b(2) and c(10-14). The alpha and beta chains form an alternating ring which encloses part of the gamma chain. F(1) is attached to F(0) by a central stalk formed by the gamma and epsilon chains, while a peripheral stalk is formed by the delta and b chains.

It localises to the cell membrane. F(1)F(0) ATP synthase produces ATP from ADP in the presence of a proton or sodium gradient. F-type ATPases consist of two structural domains, F(1) containing the extramembraneous catalytic core and F(0) containing the membrane proton channel, linked together by a central stalk and a peripheral stalk. During catalysis, ATP synthesis in the catalytic domain of F(1) is coupled via a rotary mechanism of the central stalk subunits to proton translocation. In terms of biological role, key component of the F(0) channel; it plays a direct role in translocation across the membrane. A homomeric c-ring of between 10-14 subunits forms the central stalk rotor element with the F(1) delta and epsilon subunits. The protein is ATP synthase subunit c of Wigglesworthia glossinidia brevipalpis.